The chain runs to 49 residues: YLDSGLGAPVPYPDPLEPKREVCELNPNCDELADHIGFQEAYQRFYGPV.

The Gla domain maps to 1-47; the sequence is YLDSGLGAPVPYPDPLEPKREVCELNPNCDELADHIGFQEAYQRFYG. Residues glutamate 17, glutamate 21, glutamate 24, and aspartate 30 each coordinate Ca(2+). Glutamate 17, glutamate 21, and glutamate 24 each carry 4-carboxyglutamate. An intrachain disulfide couples cysteine 23 to cysteine 29.

Belongs to the osteocalcin/matrix Gla protein family. Gamma-carboxyglutamate residues are formed by vitamin K dependent carboxylation by GGCX. These residues are essential for the binding of calcium. Decarboxylation promotes the hormone activity.

It localises to the secreted. Its function is as follows. The carboxylated form is one of the main organic components of the bone matrix, which constitutes 1-2% of the total bone protein. It acts as a negative regulator of bone formation and is required to limit bone formation without impairing bone resorption or mineralization. The carboxylated form binds strongly to apatite and calcium. Functionally, the uncarboxylated form acts as a hormone secreted by osteoblasts, which regulates different cellular processes, such as energy metabolism, male fertility and brain development. Regulates of energy metabolism by acting as a hormone favoring pancreatic beta-cell proliferation, insulin secretion and sensitivity and energy expenditure. Uncarboxylated osteocalcin hormone also promotes testosterone production in the testes: acts as a ligand for G protein-coupled receptor GPRC6A at the surface of Leydig cells, initiating a signaling response that promotes the expression of enzymes required for testosterone synthesis in a CREB-dependent manner. Also acts as a regulator of brain development: osteocalcin hormone crosses the blood-brain barrier and acts as a ligand for GPR158 on neurons, initiating a signaling response that prevents neuronal apoptosis in the hippocampus, favors the synthesis of all monoamine neurotransmitters and inhibits that of gamma-aminobutyric acid (GABA). Osteocalcin also crosses the placenta during pregnancy and maternal osteocalcin is required for fetal brain development. The sequence is that of Osteocalcin (BGLAP) from Canis lupus familiaris (Dog).